The sequence spans 396 residues: Na(+)/H(+) antiporter NhaA 1 (396 aa).

Transmembrane regions (helical) follow at residues 15 to 35, 60 to 80, 96 to 116, 126 to 146, 155 to 175, 179 to 199, 207 to 227, 255 to 275, 290 to 312, 329 to 349, and 363 to 383; these read AGIF…VGFL, LEFW…GLEL, FLPS…FAVI, GWAI…ALLG, IFVL…IALF, ALNF…LVMC, IPFV…GIHA, SLGY…NAGV, PLGV…SWFL, LYAV…VDNL, and LAIL…AKAV.

It belongs to the NhaA Na(+)/H(+) (TC 2.A.33) antiporter family.

The protein resides in the cell inner membrane. It carries out the reaction Na(+)(in) + 2 H(+)(out) = Na(+)(out) + 2 H(+)(in). Its function is as follows. Na(+)/H(+) antiporter that extrudes sodium in exchange for external protons. This Campylobacter hominis (strain ATCC BAA-381 / DSM 21671 / CCUG 45161 / LMG 19568 / NCTC 13146 / CH001A) protein is Na(+)/H(+) antiporter NhaA 1.